A 193-amino-acid polypeptide reads, in one-letter code: Potassium-transporting ATPase KdpC subunit (193 aa).

Residues 14-34 traverse the membrane as a helical segment; sequence ITFTFLVLCGLVYPLIVTGIA.

Belongs to the KdpC family. In terms of assembly, the system is composed of three essential subunits: KdpA, KdpB and KdpC.

It is found in the cell membrane. Its function is as follows. Part of the high-affinity ATP-driven potassium transport (or Kdp) system, which catalyzes the hydrolysis of ATP coupled with the electrogenic transport of potassium into the cytoplasm. This subunit acts as a catalytic chaperone that increases the ATP-binding affinity of the ATP-hydrolyzing subunit KdpB by the formation of a transient KdpB/KdpC/ATP ternary complex. The polypeptide is Potassium-transporting ATPase KdpC subunit (Bacillus mycoides (strain KBAB4) (Bacillus weihenstephanensis)).